The primary structure comprises 522 residues: MGNEEISDFEKQRLANIAERDALLKQLSLNAQSVFTPTLPNRATGSQAKTKKKPAPKKVKKEEESPAPRRMSSRLRGIAADSEVAKRKAEEQHQAYQEAERAKRVRKSDSFSLNDIFVSGQKLSGDGLLGVDVVTKGVAVPYQRTFGDDDIKKTTDKELKALRKEMSELQLWEAWEPNRIKLTPERVYTMTFHPSETKPLIFAGDKMGHLGILDASQEKPTSVKQEDEDEEDDDPDPVLTTLKPHTRTISSMVIHPSKPTHLYTASYDSSIREMDLDKTTSVERYAPDSTSDDVPLSGLDMAADDPNTLYWTTLEGEFGRYDMRTPKQGSVAVWSLSEKKIGGFSLFPTHSHYFATASLDRTMRLWDIRKLSRREPVPVGEHQSRLSVSHAAFNSAGQVATSSYDDSLKLYDFGAKGIASWKPGHTLSDAEMKPDTVVRHNCQTGRWVTILRPQWQINPQSHIQRFCIGNMNRFVDVYSSSGDQLAQLGGDGITAVPAVAVFHRSKNWIAGGTASGKICLWM.

Polar residues predominate over residues 34–47 (VFTPTLPNRATGSQ). Disordered regions lie at residues 34 to 89 (VFTP…KRKA) and 217 to 239 (QEKPTSVKQEDEDEEDDDPDPVL). Positions 49-59 (KTKKKPAPKKV) are enriched in basic residues. Residues 182–223 (LTPERVYTMTFHPSETKPLIFAGDKMGHLGILDASQEKPTSV) form a WD 1 repeat. Positions 226 to 236 (EDEDEEDDDPD) are enriched in acidic residues. WD repeat units follow at residues 244 to 284 (PHTR…SVER), 294 to 331 (VPLSGLDMAADDPNTLYWTTLEGEFGRYDMRTPKQGSV), 336 to 376 (LSEK…RREP), 381 to 422 (EHQS…ASWK), 445 to 488 (GRWV…LAQL), and 491 to 522 (DGITAVPAVAVFHRSKNWIAGGTASGKICLWM).

The protein belongs to the WD repeat DDB2/WDR76 family.

DNA-binding protein that binds to both single- and double-stranded DNA. Binds preferentially to UV-damaged DNA. May be involved in DNA-metabolic processes. The sequence is that of DNA damage-binding protein cmr1 from Aspergillus oryzae (strain ATCC 42149 / RIB 40) (Yellow koji mold).